Here is a 183-residue protein sequence, read N- to C-terminus: Bifunctional protein PyrR (183 aa).

Positions 102-114 match the PRPP-binding motif; the sequence is VVLVDDVLYTGRT.

It belongs to the purine/pyrimidine phosphoribosyltransferase family. PyrR subfamily. As to quaternary structure, homodimer and homohexamer; in equilibrium.

The catalysed reaction is UMP + diphosphate = 5-phospho-alpha-D-ribose 1-diphosphate + uracil. Regulates transcriptional attenuation of the pyrimidine nucleotide (pyr) operon by binding in a uridine-dependent manner to specific sites on pyr mRNA. This disrupts an antiterminator hairpin in the RNA and favors formation of a downstream transcription terminator, leading to a reduced expression of downstream genes. Its function is as follows. Also displays a weak uracil phosphoribosyltransferase activity which is not physiologically significant. The chain is Bifunctional protein PyrR from Listeria welshimeri serovar 6b (strain ATCC 35897 / DSM 20650 / CCUG 15529 / CIP 8149 / NCTC 11857 / SLCC 5334 / V8).